Here is a 153-residue protein sequence, read N- to C-terminus: MLRISNKIRFYCKIAAKSDLKSKLDFTQLRHPTKVPQQPEPNAFPDLDNNTDDDPIDSKTIQLLERLSLVDLDSEEALKTLKSSIQFANRIVDIPTENVPALYTVLEKQQLQLRNDSVTEGNCRQEILRNAKITDEDYFVSPPGNIPLEQQNE.

The interval 31-55 (HPTKVPQQPEPNAFPDLDNNTDDDP) is disordered.

It belongs to the GatC family. Subunit of the heterotrimeric GatCAB amidotransferase (AdT) complex, composed of A, B and C subunits.

It localises to the mitochondrion. The catalysed reaction is L-glutamyl-tRNA(Gln) + L-glutamine + ATP + H2O = L-glutaminyl-tRNA(Gln) + L-glutamate + ADP + phosphate + H(+). Allows the formation of correctly charged Gln-tRNA(Gln) through the transamidation of misacylated Glu-tRNA(Gln) in the mitochondria. The reaction takes place in the presence of glutamine and ATP through an activated gamma-phospho-Glu-tRNA(Gln). This is Glutamyl-tRNA(Gln) amidotransferase subunit C, mitochondrial from Drosophila willistoni (Fruit fly).